The primary structure comprises 189 residues: Elongation factor P (189 aa).

Belongs to the elongation factor P family.

It is found in the cytoplasm. Its pathway is protein biosynthesis; polypeptide chain elongation. Involved in peptide bond synthesis. Stimulates efficient translation and peptide-bond synthesis on native or reconstituted 70S ribosomes in vitro. Probably functions indirectly by altering the affinity of the ribosome for aminoacyl-tRNA, thus increasing their reactivity as acceptors for peptidyl transferase. This Sinorhizobium medicae (strain WSM419) (Ensifer medicae) protein is Elongation factor P.